The sequence spans 493 residues: MNSTSLYAAIDLGSNSFHMLVVREAAGSIQTLTRIKRKVRLAAGLNNDNHLSAEAMERGWQCLRLFAERLQDIPQPQIRVVATATLRLAVNAGEFIAKAQTILGCPVQVISGEEEARLIYQGAAHTTGGADQRLVVDIGGASTELVTGTGAQTTSLFSLSMGCVTWLERYFSDRNLAQENFDDAEKAARDVLRPVADELRFHGWKVCVGASGTVQALQEIMMAQGMDERITLAKLQQLKQRAIQCGRLEELEIEGLTLERALVFPSGLAILIAIFTELNIQSMTLAGGALREGLVYGMLHLAVDQDIRSRTLRNIQRRFIVDTDQANRVAKLADNFLKQVENAWHIEPISRELLLSACQLHEIGLSVDFKQAPYHAAYLVRHLDLPGYTPAQKKLLATLLLNQTNPVDLSSLHQQNAVPPRVAEQLCRLLRLAILFAGRRRDDLVPEITLQALNENLTLTLPGDWLAHHPLGKELIDQESQWQSYVHWPLDVR.

It belongs to the GppA/Ppx family. GppA subfamily.

It carries out the reaction guanosine 3'-diphosphate 5'-triphosphate + H2O = guanosine 3',5'-bis(diphosphate) + phosphate + H(+). The protein operates within purine metabolism; ppGpp biosynthesis; ppGpp from GTP: step 2/2. Functionally, catalyzes the conversion of pppGpp to ppGpp. Guanosine pentaphosphate (pppGpp) is a cytoplasmic signaling molecule which together with ppGpp controls the 'stringent response', an adaptive process that allows bacteria to respond to amino acid starvation, resulting in the coordinated regulation of numerous cellular activities. The chain is Guanosine-5'-triphosphate,3'-diphosphate pyrophosphatase from Salmonella paratyphi A (strain ATCC 9150 / SARB42).